The following is a 173-amino-acid chain: Photosystem I assembly protein Ycf3 (173 aa).

3 TPR repeats span residues 35 to 68 (AFVYYRDGMSAQADGEYAEALDNYYEALTLEEDP), 72 to 105 (SYILYNIGIIHASNGEHEKALEYYEEAIQLNPRM), and 120 to 153 (GEKAREDGQQAEAEALYDKAAEYWKQAIRLAPNN).

This sequence belongs to the Ycf3 family.

Its subcellular location is the cellular thylakoid membrane. Functionally, essential for the assembly of the photosystem I (PSI) complex. May act as a chaperone-like factor to guide the assembly of the PSI subunits. This chain is Photosystem I assembly protein Ycf3, found in Microcystis aeruginosa (strain NIES-843 / IAM M-2473).